A 483-amino-acid polypeptide reads, in one-letter code: Sodium/pantothenate symporter (483 aa).

The Periplasmic segment spans residues 1–2 (MQ). Residues 3–23 (LEVILPLVAYLVVVFGISVYA) traverse the membrane as a helical segment. Over 24-42 (MRKRSTGTFLNEYFLGSRS) the chain is Cytoplasmic. A helical membrane pass occupies residues 43–63 (MGGIVLAMTLTATYISASSFI). Residues 64-73 (GGPGAAYKYG) are Periplasmic-facing. A helical membrane pass occupies residues 74 to 94 (LGWVLLAMIQLPAVWLSLGIL). At 95–123 (GKKFAILARRYNAVTLNDMLFARYQSRLL) the chain is on the cytoplasmic side. The helical transmembrane segment at 124–144 (VWLASLSLLVAFVGAMTVQFI) threads the bilayer. Residues 145–157 (GGARLLETAAGIP) lie on the Periplasmic side of the membrane. Residues 158-178 (YETGLLIFGISIALYTAFGGF) form a helical membrane-spanning segment. The Cytoplasmic segment spans residues 179–189 (RASVLNDTMQG). A helical transmembrane segment spans residues 190–210 (LVMLIGTVVLLIGVVHAAGGL). The Periplasmic portion of the chain corresponds to 211–232 (SNAVQTLQTIDPQLVTPQGADD). The chain crosses the membrane as a helical span at residues 233 to 253 (ILSPAFMTSFWVLVCFGVIGL). Residues 254–272 (PHTAVRCISYKDSKAVHRG) lie on the Cytoplasmic side of the membrane. A helical transmembrane segment spans residues 273 to 293 (IIIGTIVVAILMFGMHLAGAL). Residues 294-305 (GRAVIPDLTVPD) are Periplasmic-facing. The chain crosses the membrane as a helical span at residues 306–326 (LVIPTLMVKVLPPFAAGIFLA). The Cytoplasmic segment spans residues 327 to 368 (APMAAIMSTINAQLLQSSATIIKDLYLNIRPDQMQNETRLKR). A helical membrane pass occupies residues 369 to 389 (MSAVITLVLGALLLLAAWKPP). Topologically, residues 390 to 391 (EM) are periplasmic. Residues 392–412 (IIWLNLLAFGGLEAVFLWPLV) traverse the membrane as a helical segment. Over 413 to 423 (LGLYWERANAK) the chain is Cytoplasmic. The helical transmembrane segment at 424–444 (GALSAMIVGGVLYAVLATLNI) threads the bilayer. Residue Q445 is a topological domain, periplasmic. A helical membrane pass occupies residues 446-466 (YLGFHPIVPSLLLSLLAFLVG). The Cytoplasmic segment spans residues 467–483 (NRFGTSVPQATVLTTDK).

This sequence belongs to the sodium:solute symporter (SSF) (TC 2.A.21) family.

It is found in the cell inner membrane. The catalysed reaction is (R)-pantothenate(in) + Na(+)(in) = (R)-pantothenate(out) + Na(+)(out). Its activity is regulated as follows. Pantothenate uptake is not reduced in osmotically shocked cells or by ATP depletion with arsenate, but is reduced greater than 90% by the dissipation of the membrane electrochemical gradient with 2,4-dinitrophenol. Functionally, catalyzes the sodium-dependent uptake of extracellular pantothenate. This Escherichia coli (strain K12) protein is Sodium/pantothenate symporter.